A 196-amino-acid chain; its full sequence is Cilia- and flagella-associated protein 107 (196 aa).

Mn stretches follow at residues 46 to 61 and 96 to 108; these read TPQT…FPGH and ISTY…RHNY. A disordered region spans residues 168 to 196; it reads YPRPPAGAMSRREHAIPVPPPRLQPVPHF. The segment covering 184-196 has biased composition (pro residues); the sequence is PVPPPRLQPVPHF.

As to quaternary structure, microtubule inner protein component of sperm flagellar doublet microtubules. Expressed in trachea multiciliated cells.

The protein resides in the cytoplasm. Its subcellular location is the cytoskeleton. It is found in the cilium axoneme. It localises to the flagellum axoneme. Microtubule inner protein (MIP) part of the dynein-decorated doublet microtubules (DMTs) in cilia axoneme, which is required for motile cilia beating. The chain is Cilia- and flagella-associated protein 107 from Bos taurus (Bovine).